Here is a 236-residue protein sequence, read N- to C-terminus: Phosphoribosylaminoimidazole-succinocarboxamide synthase (236 aa).

It belongs to the SAICAR synthetase family.

It catalyses the reaction 5-amino-1-(5-phospho-D-ribosyl)imidazole-4-carboxylate + L-aspartate + ATP = (2S)-2-[5-amino-1-(5-phospho-beta-D-ribosyl)imidazole-4-carboxamido]succinate + ADP + phosphate + 2 H(+). Its pathway is purine metabolism; IMP biosynthesis via de novo pathway; 5-amino-1-(5-phospho-D-ribosyl)imidazole-4-carboxamide from 5-amino-1-(5-phospho-D-ribosyl)imidazole-4-carboxylate: step 1/2. This chain is Phosphoribosylaminoimidazole-succinocarboxamide synthase, found in Pseudomonas putida (strain GB-1).